Consider the following 175-residue polypeptide: Disulfide bond formation protein B 2 (175 aa).

At 1–9 (MYLARTRFL) the chain is on the cytoplasmic side. The chain crosses the membrane as a helical span at residues 10–26 (FFLASLACASIIGTAFY). Over 27-44 (LQQTFGLDPCFLCLIQRA) the chain is Periplasmic. Cysteine 36 and cysteine 39 form a disulfide bridge. The helical transmembrane segment at 45-61 (AIIACGVLALCAACHAP) threads the bilayer. The Cytoplasmic portion of the chain corresponds to 62–68 (GPTGMRR). The chain crosses the membrane as a helical span at residues 69–85 (YSLGFLLIALTGLVTAG). Residues 86 to 142 (AQVWLQTASADQLIPFITKLEHLLSLLSLDMCIDRLRSDAMFCAEITWTLFGISLPE) are Periplasmic-facing. A helical transmembrane segment spans residues 143–161 (WSLLAFTGLALLPLYPLFS). The Cytoplasmic segment spans residues 162–175 (EFSHWLATKDRARY).

This sequence belongs to the DsbB family.

The protein resides in the cell inner membrane. Its function is as follows. Required for disulfide bond formation in some periplasmic proteins. Acts by oxidizing the DsbA protein. The polypeptide is Disulfide bond formation protein B 2 (Pseudomonas savastanoi pv. phaseolicola (strain 1448A / Race 6) (Pseudomonas syringae pv. phaseolicola (strain 1448A / Race 6))).